Consider the following 523-residue polypeptide: 2-isopropylmalate synthase (523 aa).

The Pyruvate carboxyltransferase domain occupies 5-267; sequence VIIFDTTLRD…HTAINHQEIW (263 aa). Positions 14, 202, 204, and 238 each coordinate Mn(2+). Positions 392-523 are regulatory domain; it reads RLDYFSVQSS…QHNENNKETV (132 aa).

This sequence belongs to the alpha-IPM synthase/homocitrate synthase family. LeuA type 1 subfamily. As to quaternary structure, homodimer. The cofactor is Mn(2+).

It localises to the cytoplasm. It catalyses the reaction 3-methyl-2-oxobutanoate + acetyl-CoA + H2O = (2S)-2-isopropylmalate + CoA + H(+). The protein operates within amino-acid biosynthesis; L-leucine biosynthesis; L-leucine from 3-methyl-2-oxobutanoate: step 1/4. In terms of biological role, catalyzes the condensation of the acetyl group of acetyl-CoA with 3-methyl-2-oxobutanoate (2-ketoisovalerate) to form 3-carboxy-3-hydroxy-4-methylpentanoate (2-isopropylmalate). The polypeptide is 2-isopropylmalate synthase (Shigella dysenteriae serotype 1 (strain Sd197)).